A 33-amino-acid chain; its full sequence is MSDIN-like toxin proprotein 2 (33 aa).

The propeptide occupies 1–10 (MSDINATRLP). Positions 11 to 18 (IILAPIIP) form a cross-link, cyclopeptide (Ile-Pro). A propeptide spanning residues 19–33 (CINDDVNSTLTSGER) is cleaved from the precursor.

It belongs to the MSDIN fungal toxin family. Post-translationally, processed by the macrocyclase-peptidase enzyme POPB to yield a toxic cyclic octapeptide. POPB first removes 10 residues from the N-terminus. Conformational trapping of the remaining peptide forces the enzyme to release this intermediate rather than proceed to macrocyclization. The enzyme rebinds the remaining peptide in a different conformation and catalyzes macrocyclization of the N-terminal 8 residues.

Probable toxin that belongs to the MSDIN-like toxin family responsible for a large number of food poisoning cases and deaths. This chain is MSDIN-like toxin proprotein 2, found in Amanita phalloides (Death cap).